Consider the following 593-residue polypeptide: Cyclin-dependent kinase-like 3 (593 aa).

In terms of domain architecture, Protein kinase spans 4-286 (YETLGKVGEG…STDLLHHDYF (283 aa)). Residues 10–18 (VGEGSYGTV) and Lys-33 contribute to the ATP site. The [NKR]KIAxRE motif lies at 45–51 (KIATREI). Residue Asp-125 is the Proton acceptor of the active site. The residue at position 158 (Thr-158) is a Phosphothreonine. Phosphotyrosine is present on Tyr-160. Residues 368-403 (GKGDVPDLKKTESEGEHRQQGTAEDTHPTSLDRKPS) are compositionally biased toward basic and acidic residues. Positions 368–512 (GKGDVPDLKK…NDQIASGNKR (145 aa)) are disordered. Positions 436 to 452 (NLTSSNLLAANPSSNLS) are enriched in low complexity. 2 stretches are compositionally biased toward polar residues: residues 468-491 (SSQT…QVQT) and 499-508 (RTGQNDQIAS).

This sequence belongs to the protein kinase superfamily. CMGC Ser/Thr protein kinase family. CDC2/CDKX subfamily. Highly expressed in brain, and to a lower extent in heart and testis.

The protein localises to the nucleus. Its subcellular location is the cytoplasm. It carries out the reaction L-seryl-[protein] + ATP = O-phospho-L-seryl-[protein] + ADP + H(+). It catalyses the reaction L-threonyl-[protein] + ATP = O-phospho-L-threonyl-[protein] + ADP + H(+). The polypeptide is Cyclin-dependent kinase-like 3 (Rattus norvegicus (Rat)).